We begin with the raw amino-acid sequence, 251 residues long: Adenosylcobinamide-GDP ribazoletransferase (251 aa).

7 consecutive transmembrane segments (helical) span residues 36 to 56, 60 to 80, 110 to 130, 141 to 161, 181 to 201, 202 to 222, and 231 to 251; these read LYPFIGLIIGALWYLSFFVLS, VPIMLMAALILTVPYILTGFL, VGAFSVISVVLLLLVEFAGMF, ILIFIPIASRVINGYFIVSQE, EIILLGIYVLVALITFFTLGI, NYLIAILAMGLISFILLLKVK, and DVAGYILVLMEFTGILLLGII.

The protein belongs to the CobS family. It depends on Mg(2+) as a cofactor.

It is found in the cell membrane. The enzyme catalyses alpha-ribazole + adenosylcob(III)inamide-GDP = adenosylcob(III)alamin + GMP + H(+). The catalysed reaction is alpha-ribazole 5'-phosphate + adenosylcob(III)inamide-GDP = adenosylcob(III)alamin 5'-phosphate + GMP + H(+). Its pathway is cofactor biosynthesis; adenosylcobalamin biosynthesis; adenosylcobalamin from cob(II)yrinate a,c-diamide: step 7/7. In terms of biological role, joins adenosylcobinamide-GDP and alpha-ribazole to generate adenosylcobalamin (Ado-cobalamin). Also synthesizes adenosylcobalamin 5'-phosphate from adenosylcobinamide-GDP and alpha-ribazole 5'-phosphate. The sequence is that of Adenosylcobinamide-GDP ribazoletransferase from Clostridium perfringens (strain ATCC 13124 / DSM 756 / JCM 1290 / NCIMB 6125 / NCTC 8237 / Type A).